A 125-amino-acid polypeptide reads, in one-letter code: MLKKIFLVGIGGGIGSVLRFVVSLLIVRIRFSIFPLTTFVVNLLGCFFVGILVGLSLKNNWLDENVKIFFITGFCGGFTTFSSFSLENFQLYQAGNYHTLVLYILINIIAGCAAVLLGYILTEFF.

Helical transmembrane passes span 5–25 (IFLVGIGGGIGSVLRFVVSLL), 33–53 (IFPLTTFVVNLLGCFFVGILV), 66–86 (VKIFFITGFCGGFTTFSSFSL), and 100–120 (LVLYILINIIAGCAAVLLGYI). Residues G76 and T79 each coordinate Na(+).

The protein belongs to the fluoride channel Fluc/FEX (TC 1.A.43) family.

It is found in the cell inner membrane. The enzyme catalyses fluoride(in) = fluoride(out). With respect to regulation, na(+) is not transported, but it plays an essential structural role and its presence is essential for fluoride channel function. Functionally, fluoride-specific ion channel. Important for reducing fluoride concentration in the cell, thus reducing its toxicity. The polypeptide is Fluoride-specific ion channel FluC (Azobacteroides pseudotrichonymphae genomovar. CFP2).